A 125-amino-acid polypeptide reads, in one-letter code: Small ribosomal subunit protein eS8 (125 aa).

Residues 1-11 are compositionally biased toward polar residues; sequence MAISQGKSTRL. Residues 1-38 form a disordered region; it reads MAISQGKSTRLPSGARNVANRGKRKAELGRDPAETRVD. Basic and acidic residues predominate over residues 25-38; sequence KAELGRDPAETRVD.

This sequence belongs to the eukaryotic ribosomal protein eS8 family. In terms of assembly, part of the 30S ribosomal subunit.

The polypeptide is Small ribosomal subunit protein eS8 (Methanobrevibacter smithii (strain ATCC 35061 / DSM 861 / OCM 144 / PS)).